We begin with the raw amino-acid sequence, 249 residues long: Exosome complex component Rrp41 (249 aa).

Belongs to the RNase PH family. Rrp41 subfamily. Component of the archaeal exosome complex. Forms a hexameric ring-like arrangement composed of 3 Rrp41-Rrp42 heterodimers. The hexameric ring associates with a trimer of Rrp4 and/or Csl4 subunits.

Its subcellular location is the cytoplasm. Its function is as follows. Catalytic component of the exosome, which is a complex involved in RNA degradation. Has 3'-&gt;5' exoribonuclease activity. Can also synthesize heteromeric RNA-tails. The chain is Exosome complex component Rrp41 from Pyrococcus abyssi (strain GE5 / Orsay).